A 49-amino-acid polypeptide reads, in one-letter code: MVIGLVIFVSVAATIVGVLSNVLDMIMYVEENNEEDAKIKEEQELLLLY.

A topological domain (virion surface) is located at residue methionine 1. The chain crosses the membrane as a helical span at residues 2–22; that stretch reads VIGLVIFVSVAATIVGVLSNV. Residues 23–49 lie on the Intravirion side of the membrane; that stretch reads LDMIMYVEENNEEDAKIKEEQELLLLY.

Belongs to the orthopoxvirus OPG059 family.

It localises to the virion membrane. It is found in the host membrane. May play a role in cell adhesion and is important for virus virulence in vivo, although it is not required for the virus life cycle in cell cultures. This chain is Protein OPG059 (OPG059), found in Cynomys gunnisoni (Gunnison's prairie dog).